A 335-amino-acid polypeptide reads, in one-letter code: Cathepsin B (335 aa).

An N-terminal signal peptide occupies residues 1 to 17; that stretch reads MWRLLATLSCLLVLTSA. A propeptide spans 18–79 (activation peptide); it reads RSSLYFPPLS…QRDAFAADVV (62 aa). 6 disulfide bridges follow: Cys93–Cys122, Cys105–Cys150, Cys141–Cys207, Cys142–Cys146, Cys179–Cys211, and Cys187–Cys198. The active site involves Cys108. Asn192 is a glycosylation site (N-linked (GlcNAc...) asparagine). Residue Lys220 is modified to N6-acetyllysine. A disulfide bridge connects residues Cys227 and Cys331. Catalysis depends on residues His278 and Asn298. Positions 333–335 are excised as a propeptide; it reads HQY.

The protein belongs to the peptidase C1 family. In terms of assembly, dimer of a heavy chain and a light chain cross-linked by a disulfide bond. Interacts with SRPX2. Directly interacts with SHKBP1. Expressed in myoblasts, the myotube, fibroblasts and fetal muscle (at protein level). Expressed in the spleen (at protein level).

The protein localises to the lysosome. The protein resides in the melanosome. Its subcellular location is the secreted. It localises to the extracellular space. It is found in the apical cell membrane. The enzyme catalyses Hydrolysis of proteins with broad specificity for peptide bonds. Preferentially cleaves -Arg-Arg-|-Xaa bonds in small molecule substrates (thus differing from cathepsin L). In addition to being an endopeptidase, shows peptidyl-dipeptidase activity, liberating C-terminal dipeptides.. Functionally, thiol protease which is believed to participate in intracellular degradation and turnover of proteins. Cleaves matrix extracellular phosphoglycoprotein MEPE. Involved in the solubilization of cross-linked TG/thyroglobulin in the thyroid follicle lumen. Has also been implicated in tumor invasion and metastasis. In Bos taurus (Bovine), this protein is Cathepsin B (CTSB).